Consider the following 1746-residue polypeptide: tRNA (32-2'-O)-methyltransferase regulator THADA (1746 aa).

Residues 1252–1286 are a coiled coil; sequence EQALAEIRRIVVELKALQLRLKNTEAANTKLNTNV.

This sequence belongs to the THADA family. In terms of assembly, interacts with SERCA. As to expression, detected in the larval fat body, salivary glands and wing imaginal disks (at protein level).

The protein localises to the endoplasmic reticulum. In terms of biological role, together with methyltransferase Trm7-32, methylates the 2'-O-ribose of nucleotides at position 32 of the anticodon loop of substrate tRNAs. Plays a key role in energy homeostasis by regulating the balance between energy storage and heat production. Functions by negatively regulating Ca(2+) signaling pathways that are involved in heat production and maintaining correct lipid storage in the fat body. Regulates Ca(2+) signaling pathways by reducing the activity of the calcium-transporting ATPase SERCA possibly by promoting uncoupling of SERCA ATP hydrolysis from calcium pumping. May also function in the nervous system to control feeding behavior. This chain is tRNA (32-2'-O)-methyltransferase regulator THADA, found in Drosophila melanogaster (Fruit fly).